The following is a 194-amino-acid chain: Peptidyl-tRNA hydrolase (194 aa).

Tyr-16 serves as a coordination point for tRNA. The active-site Proton acceptor is the His-21. Residues Phe-67, Asn-69, and Asn-115 each coordinate tRNA.

The protein belongs to the PTH family. As to quaternary structure, monomer.

The protein localises to the cytoplasm. It catalyses the reaction an N-acyl-L-alpha-aminoacyl-tRNA + H2O = an N-acyl-L-amino acid + a tRNA + H(+). Hydrolyzes ribosome-free peptidyl-tRNAs (with 1 or more amino acids incorporated), which drop off the ribosome during protein synthesis, or as a result of ribosome stalling. Functionally, catalyzes the release of premature peptidyl moieties from peptidyl-tRNA molecules trapped in stalled 50S ribosomal subunits, and thus maintains levels of free tRNAs and 50S ribosomes. The sequence is that of Peptidyl-tRNA hydrolase from Colwellia psychrerythraea (strain 34H / ATCC BAA-681) (Vibrio psychroerythus).